Reading from the N-terminus, the 194-residue chain is Leucyl/phenylalanyl-tRNA--protein transferase (194 aa).

This sequence belongs to the L/F-transferase family.

It is found in the cytoplasm. The catalysed reaction is N-terminal L-lysyl-[protein] + L-leucyl-tRNA(Leu) = N-terminal L-leucyl-L-lysyl-[protein] + tRNA(Leu) + H(+). The enzyme catalyses N-terminal L-arginyl-[protein] + L-leucyl-tRNA(Leu) = N-terminal L-leucyl-L-arginyl-[protein] + tRNA(Leu) + H(+). It catalyses the reaction L-phenylalanyl-tRNA(Phe) + an N-terminal L-alpha-aminoacyl-[protein] = an N-terminal L-phenylalanyl-L-alpha-aminoacyl-[protein] + tRNA(Phe). Its function is as follows. Functions in the N-end rule pathway of protein degradation where it conjugates Leu, Phe and, less efficiently, Met from aminoacyl-tRNAs to the N-termini of proteins containing an N-terminal arginine or lysine. The protein is Leucyl/phenylalanyl-tRNA--protein transferase of Chlorobaculum parvum (strain DSM 263 / NCIMB 8327) (Chlorobium vibrioforme subsp. thiosulfatophilum).